A 249-amino-acid polypeptide reads, in one-letter code: Phosphate import ATP-binding protein PstB 2 (249 aa).

An ABC transporter domain is found at 4 to 244; it reads IEVRDLDLFY…PKDKRTEDYI (241 aa). An ATP-binding site is contributed by 36–43; that stretch reads GPSGCGKS.

This sequence belongs to the ABC transporter superfamily. Phosphate importer (TC 3.A.1.7) family. As to quaternary structure, the complex is composed of two ATP-binding proteins (PstB), two transmembrane proteins (PstC and PstA) and a solute-binding protein (PstS).

It is found in the cell membrane. The enzyme catalyses phosphate(out) + ATP + H2O = ADP + 2 phosphate(in) + H(+). Its function is as follows. Part of the ABC transporter complex PstSACB involved in phosphate import. Responsible for energy coupling to the transport system. The chain is Phosphate import ATP-binding protein PstB 2 from Caldanaerobacter subterraneus subsp. tengcongensis (strain DSM 15242 / JCM 11007 / NBRC 100824 / MB4) (Thermoanaerobacter tengcongensis).